Here is a 346-residue protein sequence, read N- to C-terminus: Peripherin-2 (346 aa).

Over 1 to 24 the chain is Cytoplasmic; that stretch reads MALLKVKFDQKKRVKLAQGLWLMN. The helical transmembrane segment at 25-43 threads the bilayer; sequence WLSVLAGIVIFSLGLFLKI. Over 44-61 the chain is Lumenal; that stretch reads ELRKRSDVMNNSESHFVP. N-linked (GlcNAc...) asparagine glycosylation occurs at Asn53. A helical transmembrane segment spans residues 62 to 80; that stretch reads NSLIGMGVLSCVFNSLAGK. The Cytoplasmic segment spans residues 81–99; it reads ICYDALDPSKYAKWKPWLK. A helical transmembrane segment spans residues 100-123; it reads SYLVVCVLFNIVLFLVALCCFLMR. The Lumenal portion of the chain corresponds to 124 to 264; that stretch reads GSLESTLAQG…LSYYGSLMNS (141 aa). Residue Asn229 is glycosylated (N-linked (GlcNAc...) asparagine). A helical membrane pass occupies residues 265-290; sequence MGAVTLLVWLFEVSITIGLRYLHTAL. The Cytoplasmic segment spans residues 291–346; that stretch reads EGVSNPEDLECESEGWLLEKSVSETWKAFLESLKKLGKSNQVEAEGADAGQAPEAG. The segment at 341 to 346 is interaction with MREG; the sequence is QAPEAG.

Belongs to the PRPH2/ROM1 family. Homodimer; disulfide-linked. Forms a homotetramer. Forms a heterotetramer with ROM1. Homotetramer and heterotetramer core complexes go on to form higher order complexes by formation of intermolecular disulfide bonds. Interacts with MREG. Interacts with STX3. Interacts with SNAP25. Retina (photoreceptor). In rim region of ROS (rod outer segment) disks.

It localises to the membrane. The protein localises to the cell projection. Its subcellular location is the cilium. It is found in the photoreceptor outer segment. The protein resides in the photoreceptor inner segment. In terms of biological role, essential for retina photoreceptor outer segment disk morphogenesis, may also play a role with ROM1 in the maintenance of outer segment disk structure. Required for the maintenance of retinal outer nuclear layer thickness. Required for the correct development and organization of the photoreceptor inner segment. This is Peripherin-2 (PRPH2) from Felis catus (Cat).